The following is a 215-amino-acid chain: Large ribosomal subunit protein uL3 (215 aa).

The disordered stretch occupies residues 134–166 (MAHGSKNHRAPGSIGAGTTPGRVFPGKRMPGRM).

This sequence belongs to the universal ribosomal protein uL3 family. In terms of assembly, part of the 50S ribosomal subunit. Forms a cluster with proteins L14 and L19.

Functionally, one of the primary rRNA binding proteins, it binds directly near the 3'-end of the 23S rRNA, where it nucleates assembly of the 50S subunit. The polypeptide is Large ribosomal subunit protein uL3 (Gloeobacter violaceus (strain ATCC 29082 / PCC 7421)).